Here is a 616-residue protein sequence, read N- to C-terminus: ATP-dependent zinc metalloprotease FtsH 3 (616 aa).

The Cytoplasmic segment spans residues 1–9 (MSKNNKKWR). Residues 10-30 (NAGLYALLLIVVLALASAFFD) form a helical membrane-spanning segment. At 31–108 (RPTQTRETLS…VQPQSDEGFW (78 aa)) the chain is on the lumenal side. A helical membrane pass occupies residues 109 to 129 (FRIASTLFLPILLLVGIFFLF). Over 130-616 (RRAQSGPGSQ…NNNAKLALLV (487 aa)) the chain is Cytoplasmic. An ATP-binding site is contributed by 201-208 (GPPGTGKT). Histidine 423 provides a ligand contact to Zn(2+). Residue glutamate 424 is part of the active site. Zn(2+)-binding residues include histidine 427 and aspartate 504.

The protein in the central section; belongs to the AAA ATPase family. This sequence in the C-terminal section; belongs to the peptidase M41 family. As to quaternary structure, homohexamer (Potential). Part of a large complex that includes FtsH2 and PSII. Coimmunoprecipitates with YidC. Requires Zn(2+) as cofactor.

It is found in the cellular thylakoid membrane. Functionally, acts as a processive, ATP-dependent zinc metallopeptidase for both cytoplasmic and membrane proteins. Plays a role in the quality control of integral membrane proteins. In Synechocystis sp. (strain ATCC 27184 / PCC 6803 / Kazusa), this protein is ATP-dependent zinc metalloprotease FtsH 3.